A 364-amino-acid polypeptide reads, in one-letter code: tRNA 2-selenouridine synthase (364 aa).

Positions 14-137 constitute a Rhodanese domain; that stretch reads LIADTPIIDV…LRQTAIQATI (124 aa). C97 (S-selanylcysteine intermediate) is an active-site residue.

It belongs to the SelU family. As to quaternary structure, monomer.

It catalyses the reaction 5-methylaminomethyl-2-thiouridine(34) in tRNA + selenophosphate + (2E)-geranyl diphosphate + H2O + H(+) = 5-methylaminomethyl-2-selenouridine(34) in tRNA + (2E)-thiogeraniol + phosphate + diphosphate. The enzyme catalyses 5-methylaminomethyl-2-thiouridine(34) in tRNA + (2E)-geranyl diphosphate = 5-methylaminomethyl-S-(2E)-geranyl-thiouridine(34) in tRNA + diphosphate. It carries out the reaction 5-methylaminomethyl-S-(2E)-geranyl-thiouridine(34) in tRNA + selenophosphate + H(+) = 5-methylaminomethyl-2-(Se-phospho)selenouridine(34) in tRNA + (2E)-thiogeraniol. The catalysed reaction is 5-methylaminomethyl-2-(Se-phospho)selenouridine(34) in tRNA + H2O = 5-methylaminomethyl-2-selenouridine(34) in tRNA + phosphate. Its function is as follows. Involved in the post-transcriptional modification of the uridine at the wobble position (U34) of tRNA(Lys), tRNA(Glu) and tRNA(Gln). Catalyzes the conversion of 2-thiouridine (S2U-RNA) to 2-selenouridine (Se2U-RNA). Acts in a two-step process involving geranylation of 2-thiouridine (S2U) to S-geranyl-2-thiouridine (geS2U) and subsequent selenation of the latter derivative to 2-selenouridine (Se2U) in the tRNA chain. This chain is tRNA 2-selenouridine synthase, found in Escherichia coli O81 (strain ED1a).